Reading from the N-terminus, the 311-residue chain is UDP-N-acetylenolpyruvoylglucosamine reductase (311 aa).

Residues 29 to 191 (IGGKADIVLK…LSARLKLKPI (163 aa)) form the FAD-binding PCMH-type domain. Residue Arg-172 is part of the active site. Ser-223 functions as the Proton donor in the catalytic mechanism. Residue Glu-299 is part of the active site.

It belongs to the MurB family. The cofactor is FAD.

Its subcellular location is the cytoplasm. It catalyses the reaction UDP-N-acetyl-alpha-D-muramate + NADP(+) = UDP-N-acetyl-3-O-(1-carboxyvinyl)-alpha-D-glucosamine + NADPH + H(+). Its pathway is cell wall biogenesis; peptidoglycan biosynthesis. Functionally, cell wall formation. The chain is UDP-N-acetylenolpyruvoylglucosamine reductase from Chloroherpeton thalassium (strain ATCC 35110 / GB-78).